Reading from the N-terminus, the 230-residue chain is 7-cyano-7-deazaguanine synthase (230 aa).

Position 9–19 (9–19 (ISGGLDSTTCL)) interacts with ATP. 4 residues coordinate Zn(2+): Cys-192, Cys-202, Cys-205, and Cys-208.

The protein belongs to the QueC family. Zn(2+) is required as a cofactor.

The catalysed reaction is 7-carboxy-7-deazaguanine + NH4(+) + ATP = 7-cyano-7-deazaguanine + ADP + phosphate + H2O + H(+). Its pathway is purine metabolism; 7-cyano-7-deazaguanine biosynthesis. Catalyzes the ATP-dependent conversion of 7-carboxy-7-deazaguanine (CDG) to 7-cyano-7-deazaguanine (preQ(0)). This is 7-cyano-7-deazaguanine synthase from Myxococcus xanthus (strain DK1622).